A 146-amino-acid polypeptide reads, in one-letter code: Protein translocase subunit SecE (146 aa).

A disordered region spans residues 1–81 (MSDERYAASD…KVKKPKKSAD (81 aa)). A compositionally biased stretch (gly residues) spans 10-20 (DGGGTEVGSGT). A compositionally biased stretch (polar residues) spans 45-54 (RAANASNTGA). The segment covering 69-81 (KEGKVKKPKKSAD) has biased composition (basic and acidic residues). A helical transmembrane segment spans residues 118-138 (VVLAFLAFMVALVGLADFGLA).

Belongs to the SecE/SEC61-gamma family. As to quaternary structure, component of the Sec protein translocase complex. Heterotrimer consisting of SecY, SecE and SecG subunits. The heterotrimers can form oligomers, although 1 heterotrimer is thought to be able to translocate proteins. Interacts with the ribosome. Interacts with SecDF, and other proteins may be involved. Interacts with SecA.

The protein resides in the cell membrane. Functionally, essential subunit of the Sec protein translocation channel SecYEG. Clamps together the 2 halves of SecY. May contact the channel plug during translocation. This chain is Protein translocase subunit SecE, found in Mycobacterium leprae (strain TN).